Here is a 260-residue protein sequence, read N- to C-terminus: Putative nudix hydrolase 6 (260 aa).

A Nudix hydrolase domain is found at 113 to 257; that stretch reads PNHAADPIVS…SHFIDLLKES (145 aa). The Nudix box signature appears at 148 to 170; the sequence is GMVDAGEHVSQTLRREFAEEAMH. Positions 163 and 167 each coordinate Mg(2+).

It belongs to the Nudix hydrolase family. Mg(2+) is required as a cofactor. The cofactor is Mn(2+).

In terms of biological role, probably mediates the hydrolysis of some nucleoside diphosphate derivatives. The protein is Putative nudix hydrolase 6 (ndx-6) of Caenorhabditis elegans.